A 150-amino-acid polypeptide reads, in one-letter code: Cytochrome c oxidase subunit 5A, mitochondrial (150 aa).

Residues 1-41 constitute a mitochondrion transit peptide; the sequence is MLGAALRRCAVAATTRAGPRGLLHSARTPGPAAAIQSVRCX. The SIFI-degron signature appears at 2-17; the sequence is LGAALRRCAVAATTRA. 2 positions are modified to N6-acetyllysine: lysine 87 and lysine 113. Phosphothreonine is present on threonine 141.

It belongs to the cytochrome c oxidase subunit 5A family. As to quaternary structure, component of the cytochrome c oxidase (complex IV, CIV), a multisubunit enzyme composed of 14 subunits. The complex is composed of a catalytic core of 3 subunits MT-CO1, MT-CO2 and MT-CO3, encoded in the mitochondrial DNA, and 11 supernumerary subunits COX4I, COX5A, COX5B, COX6A, COX6B, COX6C, COX7A, COX7B, COX7C, COX8 and NDUFA4, which are encoded in the nuclear genome. The complex exists as a monomer or a dimer and forms supercomplexes (SCs) in the inner mitochondrial membrane with NADH-ubiquinone oxidoreductase (complex I, CI) and ubiquinol-cytochrome c oxidoreductase (cytochrome b-c1 complex, complex III, CIII), resulting in different assemblies (supercomplex SCI(1)III(2)IV(1) and megacomplex MCI(2)III(2)IV(2)). Interacts with AFG1L. Interacts with RAB5IF. In terms of processing, in response to mitochondrial stress, the precursor protein is ubiquitinated by the SIFI complex in the cytoplasm before mitochondrial import, leading to its degradation. Within the SIFI complex, UBR4 initiates ubiquitin chain that are further elongated or branched by KCMF1.

It localises to the mitochondrion inner membrane. It functions in the pathway energy metabolism; oxidative phosphorylation. In terms of biological role, component of the cytochrome c oxidase, the last enzyme in the mitochondrial electron transport chain which drives oxidative phosphorylation. The respiratory chain contains 3 multisubunit complexes succinate dehydrogenase (complex II, CII), ubiquinol-cytochrome c oxidoreductase (cytochrome b-c1 complex, complex III, CIII) and cytochrome c oxidase (complex IV, CIV), that cooperate to transfer electrons derived from NADH and succinate to molecular oxygen, creating an electrochemical gradient over the inner membrane that drives transmembrane transport and the ATP synthase. Cytochrome c oxidase is the component of the respiratory chain that catalyzes the reduction of oxygen to water. Electrons originating from reduced cytochrome c in the intermembrane space (IMS) are transferred via the dinuclear copper A center (CU(A)) of subunit 2 and heme A of subunit 1 to the active site in subunit 1, a binuclear center (BNC) formed by heme A3 and copper B (CU(B)). The BNC reduces molecular oxygen to 2 water molecules using 4 electrons from cytochrome c in the IMS and 4 protons from the mitochondrial matrix. The sequence is that of Cytochrome c oxidase subunit 5A, mitochondrial (COX5A) from Pan paniscus (Pygmy chimpanzee).